We begin with the raw amino-acid sequence, 33 residues long: Brevinin-2DYa (33 aa).

Cysteines 27 and 33 form a disulfide.

In terms of tissue distribution, expressed by the skin glands.

The protein resides in the secreted. Functionally, antimicrobial peptide. This Rana dybowskii (Dybovsky's frog) protein is Brevinin-2DYa.